Reading from the N-terminus, the 278-residue chain is Protein lyl-1 (278 aa).

Positions 1–46 are disordered; that stretch reads MCPPQARAEVGSAMTEKTEMVCASSPAPAPPSKPASPGPLSTEEVD. A compositionally biased stretch (pro residues) spans 27 to 37; sequence APAPPSKPASP. Positions 149-201 constitute a bHLH domain; that stretch reads ARRVFTNSRERWRQQHVNGAFAELRKLLPTHPPDRKLSKNEVLRLAMKYIGFL. The interval 212–278 is disordered; the sequence is LTSGPSAPGS…EQTSLSPEVR (67 aa). The segment covering 269-278 has biased composition (polar residues); it reads EQTSLSPEVR. Residue Ser-274 is modified to Phosphoserine.

In terms of assembly, efficient DNA binding requires dimerization with another bHLH protein.

Its subcellular location is the nucleus. This Mus musculus (Mouse) protein is Protein lyl-1 (Lyl1).